A 151-amino-acid chain; its full sequence is Tetratricopeptide repeat protein 32 (151 aa).

TPR repeat units lie at residues 8–41, 58–91, and 92–125; these read SHAT…CACA, ATAY…QPNF, and EVPY…NPGF.

This chain is Tetratricopeptide repeat protein 32 (TTC32), found in Homo sapiens (Human).